The sequence spans 268 residues: Small ribosomal subunit protein eS1 (268 aa).

Belongs to the eukaryotic ribosomal protein eS1 family. As to quaternary structure, component of the small ribosomal subunit. Mature ribosomes consist of a small (40S) and a large (60S) subunit. The 40S subunit contains about 33 different proteins and 1 molecule of RNA (18S). The 60S subunit contains about 49 different proteins and 3 molecules of RNA (28S, 5.8S and 5S).

It is found in the cytoplasm. The protein is Small ribosomal subunit protein eS1 of Artemia franciscana (Brine shrimp).